The chain runs to 88 residues: MQAARFIFTGVVQGVFFRASTRERALALQLRGHARNQADGSVEVVAAGSAAALEALEHWLWQGSPASKVASVTRTPCAIPTTEAFVTG.

The 86-residue stretch at 3–88 folds into the Acylphosphatase-like domain; that stretch reads AARFIFTGVV…IPTTEAFVTG (86 aa). Residues Arg-18 and Asn-36 contribute to the active site.

The protein belongs to the acylphosphatase family.

The enzyme catalyses an acyl phosphate + H2O = a carboxylate + phosphate + H(+). In Xanthomonas campestris pv. campestris (strain 8004), this protein is Acylphosphatase (acyP).